We begin with the raw amino-acid sequence, 603 residues long: Serine/threonine-protein kinase HAL4/SAT4 (603 aa).

Polar residues-rich tracts occupy residues 1-15 (MTGM…PQQT), 30-60 (RSGS…SASK), and 68-85 (TPTT…NTAG). 3 disordered regions span residues 1 to 86 (MTGM…TAGV), 150 to 171 (LSPK…PTPT), and 267 to 301 (DKYP…THNI). A compositionally biased stretch (low complexity) spans 159 to 171 (NSNTAITPAPTPT). The segment covering 282-296 (PERDIYRSDQKDSKN) has biased composition (basic and acidic residues). Positions 316-590 (GRCQEVLGKG…GKQILNSEWG (275 aa)) constitute a Protein kinase domain. Residues 322–330 (LGKGAFGVV) and K353 contribute to the ATP site. D449 serves as the catalytic Proton acceptor.

The protein belongs to the protein kinase superfamily. Ser/Thr protein kinase family.

The catalysed reaction is L-seryl-[protein] + ATP = O-phospho-L-seryl-[protein] + ADP + H(+). The enzyme catalyses L-threonyl-[protein] + ATP = O-phospho-L-threonyl-[protein] + ADP + H(+). In terms of biological role, promotes K(+) uptake, by the potassium transporter TRK1-TRK2, which leads to the subsequent cellular resistance to toxic cations such as Na(+), Li(+) and Ca(2+). In Saccharomyces cerevisiae (strain ATCC 204508 / S288c) (Baker's yeast), this protein is Serine/threonine-protein kinase HAL4/SAT4 (SAT4).